The primary structure comprises 406 residues: Peptidase T (406 aa).

Histidine 81 contributes to the Zn(2+) binding site. The active site involves aspartate 83. Residue aspartate 142 coordinates Zn(2+). The active-site Proton acceptor is the glutamate 176. Residues glutamate 177, aspartate 199, and histidine 381 each contribute to the Zn(2+) site.

Belongs to the peptidase M20B family. Requires Zn(2+) as cofactor.

It is found in the cytoplasm. It carries out the reaction Release of the N-terminal residue from a tripeptide.. Its function is as follows. Cleaves the N-terminal amino acid of tripeptides. This chain is Peptidase T, found in Streptococcus pneumoniae serotype 2 (strain D39 / NCTC 7466).